We begin with the raw amino-acid sequence, 334 residues long: Glyceraldehyde-3-phosphate dehydrogenase B (334 aa).

NAD(+) is bound by residues Arg-12–Ile-13, Asp-34, and Ser-121. D-glyceraldehyde 3-phosphate contacts are provided by residues Ser-149–Thr-151, Thr-180, Thr-209–Gly-210, and Arg-232. The active-site Nucleophile is the Cys-150. Residue Asn-314 coordinates NAD(+).

The protein belongs to the glyceraldehyde-3-phosphate dehydrogenase family. In terms of assembly, homotetramer.

The enzyme catalyses D-glyceraldehyde 3-phosphate + phosphate + NAD(+) = (2R)-3-phospho-glyceroyl phosphate + NADH + H(+). It participates in carbohydrate degradation; glycolysis; pyruvate from D-glyceraldehyde 3-phosphate: step 1/5. Its function is as follows. Glyceraldehyde-3-phosphate dehydrogenase; part of the gene cluster that mediates the biosynthesis of heptelidic acid (HA), a sesquiterpene lactone that acts as an inhibitor of glyceraldehyde-3-phosphatedehydrogenase (GAPDH) and a growth inhibitor of the salt-tolerant lactic acid bacteria in soy sauce brewing. The GAPDPH hepG/gdpB shows much higher resistance to HA than the GAPDH gpdA located outside of the cluster, but it does not seem to act in self-resistance. In Aspergillus oryzae (strain ATCC 42149 / RIB 40) (Yellow koji mold), this protein is Glyceraldehyde-3-phosphate dehydrogenase B.